The chain runs to 34 residues: Photosystem II reaction center protein M (34 aa).

The chain crosses the membrane as a helical span at residues 5-25 (ILAFIATALFISIPTAFLLIP).

It belongs to the PsbM family. In terms of assembly, PSII is composed of 1 copy each of membrane proteins PsbA, PsbB, PsbC, PsbD, PsbE, PsbF, PsbH, PsbI, PsbJ, PsbK, PsbL, PsbM, PsbT, PsbX, PsbY, PsbZ, Psb30/Ycf12, at least 3 peripheral proteins of the oxygen-evolving complex and a large number of cofactors. It forms dimeric complexes.

It is found in the plastid. The protein resides in the chloroplast thylakoid membrane. One of the components of the core complex of photosystem II (PSII). PSII is a light-driven water:plastoquinone oxidoreductase that uses light energy to abstract electrons from H(2)O, generating O(2) and a proton gradient subsequently used for ATP formation. It consists of a core antenna complex that captures photons, and an electron transfer chain that converts photonic excitation into a charge separation. This subunit is found at the monomer-monomer interface. The chain is Photosystem II reaction center protein M from Psilotum nudum (Whisk fern).